Consider the following 248-residue polypeptide: UPF0246 protein RAF_ORF0648 (248 aa).

The protein belongs to the UPF0246 family.

The sequence is that of UPF0246 protein RAF_ORF0648 from Rickettsia africae (strain ESF-5).